Here is a 45-residue protein sequence, read N- to C-terminus: Large ribosomal subunit protein bL34 (45 aa).

Residues 1-27 form a disordered region; it reads MTKRTLGGTSRKRKRVSGFRVRMRTHT. Basic residues predominate over residues 10–27; it reads SRKRKRVSGFRVRMRTHT.

Belongs to the bacterial ribosomal protein bL34 family.

In Prochlorococcus marinus (strain MIT 9211), this protein is Large ribosomal subunit protein bL34.